A 390-amino-acid chain; its full sequence is MRIVYFDCFAGIAGDMTVAALIELGVPIDYLREELAKLPLPLSAYSISVEQVQRKGIAATRFHVRAEEHQPHRHYTDIAAMIEQSTLSDRVKEMAQRVFFRLAEAEARVHGVEIGHVHFHEVGGVDSIVDIVGAAICLDYLGIGELHVSPLPLGSGFVETAHGRLPVPAPATAELLRGIPVHGDVGPGERVTPTGAAIVAALADSFGRAPAMRVVAVGCGAGSKDFDDMPNVVRLVMGEKTAILLKDEIYVIETHIDDMNPEILGFLMERLLACGALDVAFSPLQMKKNRPGSKLTILSSFDKLDELARLVLTESTAIGVRYYPVARMILSRAMEERDTSLGRVKVKVVSDEAQLLRIVPEFEECRRLAREKGLPLMEVYRIIERETAGQ.

It belongs to the LarC family.

This Geotalea uraniireducens (strain Rf4) (Geobacter uraniireducens) protein is Putative nickel insertion protein.